The chain runs to 432 residues: UPF0597 protein APL_1605 (432 aa).

Belongs to the UPF0597 family.

This Actinobacillus pleuropneumoniae serotype 5b (strain L20) protein is UPF0597 protein APL_1605.